The chain runs to 1954 residues: Protein abnormal spindle (1954 aa).

Residues 134–155 form a disordered region; sequence VKNPRKFPTVGKTLQLKSPTGA. Serine 151 and serine 360 each carry phosphoserine. Threonine 364 bears the Phosphothreonine mark. Phosphoserine is present on residues serine 388, serine 390, serine 395, serine 398, serine 491, serine 495, serine 497, serine 501, serine 504, and serine 514. The segment at 476–548 is disordered; sequence KSVKGSPVKN…SSSAHAWPHA (73 aa). The segment covering 498–507 has biased composition (polar residues); sequence DAPSNESLYR. The segment covering 528-548 has biased composition (low complexity); the sequence is RSAAPANASARSSSAHAWPHA. The Calponin-homology (CH) domain maps to 836-968; the sequence is KETKDILLRF…LLWQLIYKFR (133 aa). 3 IQ domains span residues 1004-1033, 1386-1415, and 1467-1496; these read RHRA…ERTQ, TQAA…QLRQ, and QREA…KQRQ. Positions 1614-1641 form a coiled coil; sequence RANRSMKQARQEFVQLRTIAVHLQQKFR. IQ domains follow at residues 1656–1687 and 1690–1721; these read LRCS…MMDL and QKRA…IRKR.

It localises to the cytoplasm. The protein localises to the nucleus. It is found in the cytoskeleton. The protein resides in the spindle. Its subcellular location is the microtubule organizing center. It localises to the perinuclear region. In terms of biological role, required to maintain the structure of the centrosomal microtubule organizing center (MTOC) during mitosis. May have a preferential role in regulating neurogenesis. Required for germ cell mitosis and oocyte differentiation. This is Protein abnormal spindle from Drosophila melanogaster (Fruit fly).